The chain runs to 738 residues: Protein Aster-B (738 aa).

The segment at 1 to 81 (MKGFKLSCTA…SGGKNSKKSQ (81 aa)) is disordered. Polar residues predominate over residues 8-19 (CTASNSNRSTPA). Residues S28 and S30 each carry the phosphoserine modification. Over residues 41 to 51 (MVEKGSDHSSD) the composition is skewed to basic and acidic residues. Residues 59–70 (QGVQRSCSSQSG) are compositionally biased toward low complexity. Residues 96–163 (EDFRKLFKQL…KDICSMTKEK (68 aa)) enclose the GRAM domain. Positions 254 to 299 (EENEVNDSSSKSSIETKPDASPQLPKKSITNSTLTSTGSSEAPVSF) are disordered. Residues 259-268 (NDSSSKSSIE) show a composition bias toward polar residues. The residue at position 274 (S274) is a Phosphoserine. Residues 281–295 (SITNSTLTSTGSSEA) are compositionally biased toward polar residues. The VASt domain maps to 372-543 (SGRQYVNEVF…ELTKTESTYL (172 aa)). Residue Y389 is modified to Phosphotyrosine. Residues S550 and S581 each carry the phosphoserine modification. T584, T585, and T587 each carry phosphothreonine. A helical transmembrane segment spans residues 623-643 (LLLVISCVICFSLVLLVVLNM).

In terms of tissue distribution, highly expressed in the adrenal gland (at protein level) and brain. Also found in the kidney, testis and macrophages.

The protein localises to the endoplasmic reticulum membrane. Its subcellular location is the cell membrane. Its function is as follows. Cholesterol transporter that mediates non-vesicular transport of cholesterol from the plasma membrane (PM) to the endoplasmic reticulum (ER). Contains unique domains for binding cholesterol and the PM, thereby serving as a molecular bridge for the transfer of cholesterol from the PM to the ER. Plays a crucial role in cholesterol homeostasis in the adrenal gland and has the unique ability to localize to the PM based on the level of membrane cholesterol. In lipid-poor conditions localizes to the ER membrane and in response to excess cholesterol in the PM is recruited to the endoplasmic reticulum-plasma membrane contact sites (EPCS) which is mediated by the GRAM domain. At the EPCS, the sterol-binding VASt/ASTER domain binds to the cholesterol in the PM and facilitates its transfer from the PM to ER. This is Protein Aster-B (Gramd1b) from Mus musculus (Mouse).